Reading from the N-terminus, the 307-residue chain is Ribosomal RNA small subunit methyltransferase H (307 aa).

Residues 33–35, Asp-52, Leu-83, Asp-97, and Gln-104 each bind S-adenosyl-L-methionine; that span reads AGH.

It belongs to the methyltransferase superfamily. RsmH family.

The protein resides in the cytoplasm. The enzyme catalyses cytidine(1402) in 16S rRNA + S-adenosyl-L-methionine = N(4)-methylcytidine(1402) in 16S rRNA + S-adenosyl-L-homocysteine + H(+). Specifically methylates the N4 position of cytidine in position 1402 (C1402) of 16S rRNA. The chain is Ribosomal RNA small subunit methyltransferase H from Sulfurovum sp. (strain NBC37-1).